The primary structure comprises 729 residues: Polyribonucleotide nucleotidyltransferase (729 aa).

2 residues coordinate Mg(2+): Asp485 and Asp491. The 60-residue stretch at 552–611 (PRITTMKVAEDKIRTIIGKGGATIKGLIESTGVSIDIDDSGVIQLFSPDKMALEEAQKQI) folds into the KH domain. The S1 motif domain occupies 621 to 689 (GQTYQGKVSK…KQGRVKLEWK (69 aa)). A disordered region spans residues 710 to 729 (TMEEQSEEINSGNKISEEEE).

The protein belongs to the polyribonucleotide nucleotidyltransferase family. As to quaternary structure, component of the RNA degradosome, which is a multiprotein complex involved in RNA processing and mRNA degradation. The cofactor is Mg(2+).

The protein localises to the cytoplasm. The enzyme catalyses RNA(n+1) + phosphate = RNA(n) + a ribonucleoside 5'-diphosphate. Functionally, involved in mRNA degradation. Catalyzes the phosphorolysis of single-stranded polyribonucleotides processively in the 3'- to 5'-direction. This is Polyribonucleotide nucleotidyltransferase from Legionella pneumophila (strain Paris).